The sequence spans 177 residues: ATP-dependent protease subunit HslV (177 aa).

Thr-6 is a catalytic residue. The Na(+) site is built by Ala-162, Cys-165, and Thr-168.

The protein belongs to the peptidase T1B family. HslV subfamily. In terms of assembly, a double ring-shaped homohexamer of HslV is capped on each side by a ring-shaped HslU homohexamer. The assembly of the HslU/HslV complex is dependent on binding of ATP.

It localises to the cytoplasm. It carries out the reaction ATP-dependent cleavage of peptide bonds with broad specificity.. With respect to regulation, allosterically activated by HslU binding. Protease subunit of a proteasome-like degradation complex believed to be a general protein degrading machinery. The polypeptide is ATP-dependent protease subunit HslV (Desulfovibrio desulfuricans (strain ATCC 27774 / DSM 6949 / MB)).